We begin with the raw amino-acid sequence, 701 residues long: Potassium-transporting ATPase ATP-binding subunit (701 aa).

The interval 1–28 (MNPDAPTPKNKSSRSRPSDRPQARKKAK) is disordered. 4 helical membrane passes run 57–77 (MFLV…PNLF), 90–110 (GILT…EAVA), 245–265 (VLLA…PVFA), and 276–296 (ILVA…LSAI). Asp329 (4-aspartylphosphate intermediate) is an active-site residue. ATP is bound by residues Asp366, Glu370, 397 to 404 (FSAKTRMS), and Lys416. Residues Asp539 and Asp543 each contribute to the Mg(2+) site. Transmembrane regions (helical) follow at residues 599–619 (FSLA…FASA), 635–655 (AVLS…PLAL), and 681–701 (VIAP…VGLA).

Belongs to the cation transport ATPase (P-type) (TC 3.A.3) family. Type IA subfamily. The system is composed of three essential subunits: KdpA, KdpB and KdpC.

It localises to the cell membrane. It carries out the reaction K(+)(out) + ATP + H2O = K(+)(in) + ADP + phosphate + H(+). In terms of biological role, part of the high-affinity ATP-driven potassium transport (or Kdp) system, which catalyzes the hydrolysis of ATP coupled with the electrogenic transport of potassium into the cytoplasm. This subunit is responsible for energy coupling to the transport system and for the release of the potassium ions to the cytoplasm. This Anabaena sp. (strain L31) protein is Potassium-transporting ATPase ATP-binding subunit.